The primary structure comprises 361 residues: Phenylalanine--tRNA ligase alpha subunit (361 aa).

Glu-260 serves as a coordination point for Mg(2+).

This sequence belongs to the class-II aminoacyl-tRNA synthetase family. Phe-tRNA synthetase alpha subunit type 1 subfamily. As to quaternary structure, tetramer of two alpha and two beta subunits. Mg(2+) serves as cofactor.

The protein resides in the cytoplasm. It carries out the reaction tRNA(Phe) + L-phenylalanine + ATP = L-phenylalanyl-tRNA(Phe) + AMP + diphosphate + H(+). This chain is Phenylalanine--tRNA ligase alpha subunit, found in Allorhizobium ampelinum (strain ATCC BAA-846 / DSM 112012 / S4) (Agrobacterium vitis (strain S4)).